Here is a 612-residue protein sequence, read N- to C-terminus: Zinc metalloproteinase-disintegrin-like 2d (612 aa).

The signal sequence occupies residues 1 to 20; that stretch reads MIQVLLVTICLAVFPYQGSS. A propeptide spanning residues 21-189 is cleaved from the precursor; it reads IILGSGNVND…KKASQLNLTP (169 aa). The region spanning 199–395 is the Peptidase M12B domain; that stretch reads KYIELVIVAD…NRPPCILNKP (197 aa). Glutamate 202 contributes to the Ca(2+) binding site. N-linked (GlcNAc...) asparagine glycosylation is present at asparagine 218. Aspartate 286 is a binding site for Ca(2+). 3 disulfide bridges follow: cysteine 310/cysteine 390, cysteine 350/cysteine 374, and cysteine 352/cysteine 357. Histidine 335 is a binding site for Zn(2+). Glutamate 336 is an active-site residue. Histidine 339 and histidine 345 together coordinate Zn(2+). Positions 390, 393, 405, 408, 410, 412, 415, and 418 each coordinate Ca(2+). The Disintegrin domain occupies 403 to 489; sequence PPVCGNYFVE…DCPTDNFQRN (87 aa). Intrachain disulfides connect cysteine 406–cysteine 435, cysteine 417–cysteine 430, cysteine 419–cysteine 425, cysteine 429–cysteine 452, cysteine 443–cysteine 449, cysteine 448–cysteine 474, cysteine 461–cysteine 481, cysteine 468–cysteine 500, cysteine 493–cysteine 505, cysteine 512–cysteine 562, cysteine 527–cysteine 573, cysteine 540–cysteine 550, cysteine 557–cysteine 599, and cysteine 593–cysteine 605. The D/ECD-tripeptide signature appears at 467 to 469; that stretch reads ECD.

It belongs to the venom metalloproteinase (M12B) family. P-III subfamily. The cofactor is Zn(2+). As to expression, expressed by the venom gland.

It localises to the secreted. Functionally, snake venom metalloproteinase that impairs hemostasis in the envenomed animal. This is Zinc metalloproteinase-disintegrin-like 2d from Crotalus adamanteus (Eastern diamondback rattlesnake).